The primary structure comprises 1401 residues: MAPQMYEFHLPLSPEELLKSGGVNQYVVQEVLSIKHLPPQLRAFQAAFRAQGPLAMLQHFDTIYSILHHFRSIDPGLKEDTLQFLIKVVSRHSQELPAILDDTTLSGSDRNAHLNALKMNCYALIRLLESFETMASQTNLVDLDLGGKGKKARTKAAHGFDWEEERQPILQLLTQLLQLDIRHLWNHSIIEEEFVSLVTGCCYRLLENPTINHQKNRPTREAITHLLGVALTRYNHMLSATVKIIQMLQHFEHLAPVLVAAVSLWATDYGMKSIVGEIVREIGQKCPQELSRDPSGTKGFAAFLTELAERVPAILMSSMCILLDHLDGENYMMRNAVLAAMAEMVLQVLSGDQLEAAARDTRDQFLDTLQAHGHDVNSFVRSRVLQLFTRIVQQKALPLTRFQAVVALAVGRLADKSVLVCKNAIQLLASFLANNPFSCKLSDADLAGPLQKETQKLQEMRAQRRTAAASAVLDPEEEWEAMLPELKSTLQQLLQLPQGEEEIPEQIANTETTEDVKGRIYQLLAKASYKKAIILTREATGHFQESEPFSHIDPEESEETRLLNILGLIFKGPAASTQEKNPRESTGNMVTGQTVCKNKPNMSDPEESRGNDELVKQEMLVQYLQDAYSFSRKITEAIGIISKMMYENTTTVVQEVIEFFVMVFQFGVPQALFGVRRMLPLIWSKEPGVREAVLNAYRQLYLNPKGDSARAKAQALIQNLSLLLVDASVGTIQCLEEILCEFVQKDELKPAVTQLLWERATEKVACCPLERCSSVMLLGMMARGKPEIVGSNLDTLVSIGLDEKFPQDYRLAQQVCHAIANISDRRKPSLGKRHPPFRLPQEHRLFERLRETVTKGFVHPDPLWIPFKEVAVTLIYQLAEGPEVICAQILQGCAKQALEKLEEKRTSQEDPKESPAMLPTFLLMNLLSLAGDVALQQLVHLEQAVSGELCRRRVLREEQEHKTKDPKEKNTSSETTMEEELGLVGATADDTEAELIRGICEMELLDGKQTLAAFVPLLLKVCNNPGLYSNPDLSAAASLALGKFCMISATFCDSQLRLLFTMLEKSPLPIVRSNLMVATGDLAIRFPNLVDPWTPHLYARLRDPAQQVRKTAGLVMTHLILKDMVKVKGQVSEMAVLLIDPEPQIAALAKNFFNELSHKGNAIYNLLPDIISRLSDPELGVEEEPFHTIMKQLLSYITKDKQTESLVEKLCQRFRTSRTERQQRDLAYCVSQLPLTERGLRKMLDNFDCFGDKLSDESIFSAFLSVVGKLRRGAKPEGKAIIDEFEQKLRACHTRGLDGIKELEIGQAGSQRAPSAKKPSTGSRYQPLASTASDNDFVTPEPRRTTRRHPNTQQRASKKKPKVVFSSDESSEEDLSAEMTEDETPKKTTPILRASARRHRS.

Residues 1–603 (MAPQMYEFHL…TVCKNKPNMS (603 aa)) form an interactions with SMC2 and SMC4 region. 2 positions are modified to phosphoserine: Ser20 and Ser585. The span at 576 to 596 (STQEKNPRESTGNMVTGQTVC) shows a compositional bias: polar residues. Disordered regions lie at residues 576–611 (STQE…SRGN), 956–978 (REEQ…TTME), and 1303–1401 (LEIG…RHRS). Over residues 956 to 971 (REEQEHKTKDPKEKNT) the composition is skewed to basic and acidic residues. The span at 1308 to 1336 (AGSQRAPSAKKPSTGSRYQPLASTASDND) shows a compositional bias: polar residues. A phosphoserine mark is found at Ser1310, Ser1315, and Ser1330. Phosphothreonine is present on Thr1331. Position 1333 is a phosphoserine (Ser1333). Thr1339 is subject to Phosphothreonine. The short motif at 1342–1362 (PRRTTRRHPNTQQRASKKKPK) is the Bipartite nuclear localization signal element. Basic residues predominate over residues 1345-1362 (TTRRHPNTQQRASKKKPK). Residues Ser1366, Ser1367, Ser1370, Ser1371, and Ser1376 each carry the phosphoserine modification. Residues 1369–1382 (ESSEEDLSAEMTED) show a composition bias toward acidic residues. Residues Thr1384 and Thr1389 each carry the phosphothreonine; by CDK1 modification. Residue Ser1395 is modified to Phosphoserine.

Belongs to the CND1 (condensin subunit 1) family. Component of the condensin complex, which contains the SMC2 and SMC4 heterodimer, and three non SMC subunits that probably regulate the complex: NCAPH/BRRN1, NCAPD2/CAPD2 and NCAPG. Interacts with histones H1 and H3. Post-translationally, phosphorylated by CDK1. Its phosphorylation, as well as that of NCAPH and NCAPG subunits, activates the condensin complex and is required for chromosome condensation.

Its subcellular location is the nucleus. The protein resides in the cytoplasm. It localises to the chromosome. In terms of biological role, regulatory subunit of the condensin complex, a complex required for conversion of interphase chromatin into mitotic-like condense chromosomes. The condensin complex probably introduces positive supercoils into relaxed DNA in the presence of type I topoisomerases and converts nicked DNA into positive knotted forms in the presence of type II topoisomerases. May target the condensin complex to DNA via its C-terminal domain. May promote the resolution of double-strand DNA catenanes (intertwines) between sister chromatids. Condensin-mediated compaction likely increases tension in catenated sister chromatids, providing directionality for type II topoisomerase-mediated strand exchanges toward chromatid decatenation. Required for decatenation of non-centromeric ultrafine DNA bridges during anaphase. Early in neurogenesis, may play an essential role to ensure accurate mitotic chromosome condensation in neuron stem cells, ultimately affecting neuron pool and cortex size. The chain is Condensin complex subunit 1 from Homo sapiens (Human).